Here is a 123-residue protein sequence, read N- to C-terminus: NADH dehydrogenase [ubiquinone] 1 beta subcomplex subunit 7 (123 aa).

Positions 1-32 (MGTKLSVSLEGASTPETAPRVDRPPTFDPQYG) are disordered. Residues 59–102 (RDYCAHHLISLMKCQTQNAPFAGHACDGERGAWDKCEYDDHIMR) enclose the CHCH domain. 2 short sequence motifs (cx9C motif) span residues 62 to 72 (CAHHLISLMKC) and 84 to 94 (CDGERGAWDKC). Cystine bridges form between cysteine 62–cysteine 94 and cysteine 72–cysteine 84.

This sequence belongs to the complex I NDUFB7 subunit family. Complex I is composed of 45 different subunits.

It is found in the mitochondrion. The protein localises to the mitochondrion inner membrane. Its subcellular location is the mitochondrion intermembrane space. In terms of biological role, accessory subunit of the mitochondrial membrane respiratory chain NADH dehydrogenase (Complex I), that is believed not to be involved in catalysis. Complex I functions in the transfer of electrons from NADH to the respiratory chain. The immediate electron acceptor for the enzyme is believed to be ubiquinone. The protein is NADH dehydrogenase [ubiquinone] 1 beta subcomplex subunit 7 of Caenorhabditis elegans.